A 649-amino-acid chain; its full sequence is ATP-dependent DNA helicase Q1 (649 aa).

Residues 100–275 (INVTMAGKEV…QKILCIEKCF (176 aa)) enclose the Helicase ATP-binding domain. 113–120 (MPTGGGKG) is a binding site for ATP. A DEVH box motif is present at residues 219–222 (DEVH). Positions 300-451 (FIEDIVKLIN…EMVSYCQNIS (152 aa)) constitute a Helicase C-terminal domain. 4 residues coordinate Zn(2+): Cys-453, Cys-471, Cys-475, and Cys-478. Residues Lys-514 and Lys-522 each carry the N6-acetyllysine modification. Ser-597 and Ser-602 each carry phosphoserine. A compositionally biased stretch (polar residues) spans 597-608 (SFRVESSQTCHS). The segment at 597–649 (SFRVESSQTCHSEQGDKKMEEKNSGNFQKKAANMLQQSGSKNTGAKKRKIDDA) is disordered. The span at 609–619 (EQGDKKMEEKN) shows a compositional bias: basic and acidic residues. The span at 630–639 (MLQQSGSKNT) shows a compositional bias: polar residues. Ser-634 carries the post-translational modification Phosphoserine. The segment covering 640 to 649 (GAKKRKIDDA) has biased composition (basic residues).

It belongs to the helicase family. RecQ subfamily. As to quaternary structure, may form homodimers or higher order oligomers. Interacts with EXO1. Interacts with MLH1. Interacts with PARP1. Requires Mg(2+) as cofactor. Mn(2+) serves as cofactor. It depends on Zn(2+) as a cofactor.

The protein localises to the nucleus. The enzyme catalyses Couples ATP hydrolysis with the unwinding of duplex DNA by translocating in the 3'-5' direction.. It carries out the reaction ATP + H2O = ADP + phosphate + H(+). The catalysed reaction is dATP + H2O = dADP + phosphate + H(+). Functionally, DNA helicase that plays a role in DNA damage repair and genome stability. Exhibits a magnesium- and ATP-dependent DNA-helicase activity that unwinds single- and double-stranded DNA in a 3'-5' direction. Plays a role in restoring regressed replication forks. Required to restart stalled replication forks induced by abortive topoisomerase 1 and 2 lesions. May play a role in the repair of DNA that is damaged by ultraviolet light or other mutagens. This is ATP-dependent DNA helicase Q1 (RECQL) from Pongo abelii (Sumatran orangutan).